The chain runs to 60 residues: UPF0434 protein NMCC_0628 (60 aa).

This sequence belongs to the UPF0434 family.

The sequence is that of UPF0434 protein NMCC_0628 from Neisseria meningitidis serogroup C (strain 053442).